A 224-amino-acid chain; its full sequence is MNILIFGPPGSGKSTHSRRIVEEYGLTYISSGDLIRGEIERKSSLGLEMAAYLSRGDLIPDTIVNTLIISRLRRQRENFILDGYPRTPEQVIALENYLYDHGIRLDLALEIFIDEDTSVERISGRRICPNCGAVYHITYNPPKVPGICDVCGTKLIQRTDDREEVVRKRYRIYIKNMEPIIKFYRAKGIYVRVDGDGLIPDVWKRIKPLLDYIHEREKKRKEHE.

Residue 10 to 15 (GSGKST) coordinates ATP. The tract at residues 30-59 (SSGDLIRGEIERKSSLGLEMAAYLSRGDLI) is NMP. AMP-binding positions include serine 31, arginine 36, 57–59 (DLI), 83–86 (GYPR), and glutamine 90. Residues 124–161 (GRRICPNCGAVYHITYNPPKVPGICDVCGTKLIQRTDD) are LID. Arginine 125 lines the ATP pocket. Zn(2+)-binding residues include cysteine 128 and cysteine 131. 134–135 (VY) serves as a coordination point for ATP. Zn(2+) is bound by residues cysteine 148 and cysteine 151. AMP is bound by residues arginine 158 and arginine 169. Position 197 (glycine 197) interacts with ATP.

It belongs to the adenylate kinase family. As to quaternary structure, monomer.

The protein localises to the cytoplasm. The catalysed reaction is AMP + ATP = 2 ADP. It functions in the pathway purine metabolism; AMP biosynthesis via salvage pathway; AMP from ADP: step 1/1. In terms of biological role, catalyzes the reversible transfer of the terminal phosphate group between ATP and AMP. Plays an important role in cellular energy homeostasis and in adenine nucleotide metabolism. In Thermococcus gammatolerans (strain DSM 15229 / JCM 11827 / EJ3), this protein is Adenylate kinase.